A 545-amino-acid polypeptide reads, in one-letter code: CTP synthase (545 aa).

An amidoligase domain region spans residues 1-266 (MTKNYIFITG…DDYICNYFKL (266 aa)). Ser-14 contributes to the CTP binding site. A UTP-binding site is contributed by Ser-14. ATP is bound by residues 15–20 (SLGKGI) and Asp-72. The Mg(2+) site is built by Asp-72 and Glu-140. Residues 147 to 149 (DIE), 187 to 192 (KTKPTQ), and Lys-223 contribute to the CTP site. Residues 187–192 (KTKPTQ) and Lys-223 contribute to the UTP site. 239 to 241 (KDV) is an ATP binding site. Positions 291 to 543 (VIGIIGKYIK…IKSAGKHKKN (253 aa)) constitute a Glutamine amidotransferase type-1 domain. Residue Gly-352 participates in L-glutamine binding. The active-site Nucleophile; for glutamine hydrolysis is the Cys-379. L-glutamine is bound by residues 380–383 (LGMQ), Glu-403, and Arg-471. Catalysis depends on residues His-516 and Glu-518.

The protein belongs to the CTP synthase family. As to quaternary structure, homotetramer.

It carries out the reaction UTP + L-glutamine + ATP + H2O = CTP + L-glutamate + ADP + phosphate + 2 H(+). The enzyme catalyses L-glutamine + H2O = L-glutamate + NH4(+). The catalysed reaction is UTP + NH4(+) + ATP = CTP + ADP + phosphate + 2 H(+). It functions in the pathway pyrimidine metabolism; CTP biosynthesis via de novo pathway; CTP from UDP: step 2/2. With respect to regulation, allosterically activated by GTP, when glutamine is the substrate; GTP has no effect on the reaction when ammonia is the substrate. The allosteric effector GTP functions by stabilizing the protein conformation that binds the tetrahedral intermediate(s) formed during glutamine hydrolysis. Inhibited by the product CTP, via allosteric rather than competitive inhibition. Its function is as follows. Catalyzes the ATP-dependent amination of UTP to CTP with either L-glutamine or ammonia as the source of nitrogen. Regulates intracellular CTP levels through interactions with the four ribonucleotide triphosphates. In Buchnera aphidicola subsp. Acyrthosiphon pisum (strain Tuc7), this protein is CTP synthase.